The sequence spans 181 residues: ATP synthase subunit delta (181 aa).

It belongs to the ATPase delta chain family. In terms of assembly, F-type ATPases have 2 components, F(1) - the catalytic core - and F(0) - the membrane proton channel. F(1) has five subunits: alpha(3), beta(3), gamma(1), delta(1), epsilon(1). F(0) has three main subunits: a(1), b(2) and c(10-14). The alpha and beta chains form an alternating ring which encloses part of the gamma chain. F(1) is attached to F(0) by a central stalk formed by the gamma and epsilon chains, while a peripheral stalk is formed by the delta and b chains.

It is found in the cell membrane. In terms of biological role, f(1)F(0) ATP synthase produces ATP from ADP in the presence of a proton or sodium gradient. F-type ATPases consist of two structural domains, F(1) containing the extramembraneous catalytic core and F(0) containing the membrane proton channel, linked together by a central stalk and a peripheral stalk. During catalysis, ATP synthesis in the catalytic domain of F(1) is coupled via a rotary mechanism of the central stalk subunits to proton translocation. Functionally, this protein is part of the stalk that links CF(0) to CF(1). It either transmits conformational changes from CF(0) to CF(1) or is implicated in proton conduction. The protein is ATP synthase subunit delta of Lacticaseibacillus paracasei (strain ATCC 334 / BCRC 17002 / CCUG 31169 / CIP 107868 / KCTC 3260 / NRRL B-441) (Lactobacillus paracasei).